Consider the following 112-residue polypeptide: ATP synthase epsilon chain (112 aa).

It belongs to the ATPase epsilon chain family. In terms of assembly, F-type ATPases have 2 components, CF(1) - the catalytic core - and CF(0) - the membrane proton channel. CF(1) has five subunits: alpha(3), beta(3), gamma(1), delta(1), epsilon(1). CF(0) has three main subunits: a, b and c.

The protein localises to the cell inner membrane. Functionally, produces ATP from ADP in the presence of a proton gradient across the membrane. The polypeptide is ATP synthase epsilon chain (Rickettsia rickettsii (strain Sheila Smith)).